A 233-amino-acid polypeptide reads, in one-letter code: Ribulose-phosphate 3-epimerase (233 aa).

S16 contributes to the substrate binding site. Positions 41, 43, and 74 each coordinate a divalent metal cation. D43 acts as the Proton acceptor in catalysis. Substrate is bound by residues H74, 150 to 153, 185 to 187, and 207 to 208; these read GFCG, DGG, and AS. Residue D185 participates in a divalent metal cation binding. Residue D185 is the Proton donor of the active site.

The protein belongs to the ribulose-phosphate 3-epimerase family. The cofactor is a divalent metal cation.

The enzyme catalyses D-ribulose 5-phosphate = D-xylulose 5-phosphate. It functions in the pathway carbohydrate degradation. Its function is as follows. Catalyzes the reversible epimerization of D-ribulose 5-phosphate to D-xylulose 5-phosphate. The polypeptide is Ribulose-phosphate 3-epimerase (Chlamydia trachomatis serovar D (strain ATCC VR-885 / DSM 19411 / UW-3/Cx)).